Reading from the N-terminus, the 208-residue chain is Protein-L-isoaspartate O-methyltransferase (208 aa).

Residue Ser-59 is part of the active site.

Belongs to the methyltransferase superfamily. L-isoaspartyl/D-aspartyl protein methyltransferase family.

Its subcellular location is the cytoplasm. The enzyme catalyses [protein]-L-isoaspartate + S-adenosyl-L-methionine = [protein]-L-isoaspartate alpha-methyl ester + S-adenosyl-L-homocysteine. In terms of biological role, catalyzes the methyl esterification of L-isoaspartyl residues in peptides and proteins that result from spontaneous decomposition of normal L-aspartyl and L-asparaginyl residues. It plays a role in the repair and/or degradation of damaged proteins. This is Protein-L-isoaspartate O-methyltransferase from Salmonella paratyphi A (strain ATCC 9150 / SARB42).